The following is a 384-amino-acid chain: Bacterial ceramide synthase (384 aa).

It localises to the cytoplasm. The catalysed reaction is 3-oxosphinganine + a fatty acyl-CoA = N-acyl-3-oxosphinganine + CoA + H(+). It carries out the reaction 3-oxosphinganine + tetradecanoyl-CoA = N-tetradecanoyl-3-oxosphinganine + CoA + H(+). It catalyses the reaction 3-oxosphinganine + hexadecanoyl-CoA = N-hexadecanoyl-3-oxosphinganine + CoA + H(+). The enzyme catalyses 3-oxosphinganine + (9Z)-hexadecenoyl-CoA = N-(9Z-hexadecenoyl)-3-oxosphinganine + CoA + H(+). The catalysed reaction is 3-oxosphinganine + octanoyl-CoA = N-octanoyl-3-oxosphinganine + CoA + H(+). It carries out the reaction 3-oxosphinganine + decanoyl-CoA = N-decanoyl-3-oxosphinganine + CoA + H(+). It catalyses the reaction 3-oxosphinganine + dodecanoyl-CoA = N-dodecanoyl-3-oxosphinganine + CoA + H(+). The enzyme catalyses 3-oxosphinganine + octadecanoyl-CoA = N-octadecanoyl-3-oxosphinganine + CoA + H(+). The catalysed reaction is 3-oxosphinganine + eicosanoyl-CoA = N-eicosanoyl-3-oxosphinganine + CoA + H(+). It carries out the reaction 3-oxosphinganine + docosanoyl-CoA = N-docosanoyl-3-ketodihydrosphingosine + CoA + H(+). It catalyses the reaction 3-oxosphinganine + tetracosanoyl-CoA = N-tetracosanoyl-3-oxosphinganine + CoA + H(+). Its pathway is lipid metabolism; sphingolipid metabolism. In terms of biological role, involved in de novo bacterial ceramide synthesis. Catalyzes the condensation of 3-oxosphinganine with an acyl-CoA to generate oxidized ceramides. Can use acyl-CoA substrates ranging from C8 to C24, with highest in vitro activity with C14 and very little activity with acyl-CoA thioesters of 18 carbons or longer. May have a preference for monounsaturated acyl-CoA substrates, as it has a threefold greater preference for C16:1-CoA over C16:0-CoA as a substrate in vitro. The chain is Bacterial ceramide synthase from Caulobacter vibrioides (strain NA1000 / CB15N) (Caulobacter crescentus).